The following is a 521-amino-acid chain: Bifunctional purine biosynthesis protein PurH (521 aa).

Positions 1-145 (MIKQALISVS…KNHKDVIVIC (145 aa)) constitute an MGS-like domain.

The protein belongs to the PurH family.

The catalysed reaction is (6R)-10-formyltetrahydrofolate + 5-amino-1-(5-phospho-beta-D-ribosyl)imidazole-4-carboxamide = 5-formamido-1-(5-phospho-D-ribosyl)imidazole-4-carboxamide + (6S)-5,6,7,8-tetrahydrofolate. It carries out the reaction IMP + H2O = 5-formamido-1-(5-phospho-D-ribosyl)imidazole-4-carboxamide. It functions in the pathway purine metabolism; IMP biosynthesis via de novo pathway; 5-formamido-1-(5-phospho-D-ribosyl)imidazole-4-carboxamide from 5-amino-1-(5-phospho-D-ribosyl)imidazole-4-carboxamide (10-formyl THF route): step 1/1. It participates in purine metabolism; IMP biosynthesis via de novo pathway; IMP from 5-formamido-1-(5-phospho-D-ribosyl)imidazole-4-carboxamide: step 1/1. This Janthinobacterium sp. (strain Marseille) (Minibacterium massiliensis) protein is Bifunctional purine biosynthesis protein PurH.